The chain runs to 412 residues: Putative disintegrin and metalloproteinase domain-containing protein 5 (412 aa).

One can recognise a Disintegrin domain in the interval 111–199 (EKYADTNILL…YCLPDTYVRD (89 aa)). The 35-residue stretch at 351–385 (NLKLCDASNHCDRHGVCNNFNHCHCEKGYNPPYCQ) folds into the EGF-like domain.

Interacts with TEX101. Highly expressed in testis.

Its function is as follows. This is a non catalytic metalloprotease-like protein. The polypeptide is Putative disintegrin and metalloproteinase domain-containing protein 5 (ADAM5) (Homo sapiens (Human)).